Consider the following 139-residue polypeptide: Small ribosomal subunit protein bS6 (139 aa).

The segment at 97–139 (TEASPMAKAKDERDSRRSSEGERRSAPAEATEEVKETAEKAAE) is disordered. Residues 104 to 139 (KAKDERDSRRSSEGERRSAPAEATEEVKETAEKAAE) show a composition bias toward basic and acidic residues.

It belongs to the bacterial ribosomal protein bS6 family.

Its function is as follows. Binds together with bS18 to 16S ribosomal RNA. This is Small ribosomal subunit protein bS6 from Shewanella sediminis (strain HAW-EB3).